A 177-amino-acid chain; its full sequence is Cyclic pyranopterin monophosphate synthase 3 (177 aa).

Substrate contacts are provided by residues 79-81 and 116-117; these read LCH and ME. D131 is an active-site residue. The segment at 150-177 is disordered; sequence KSGGRSGHYRRHDADVKPSDGGSTEDGC.

This sequence belongs to the MoaC family. In terms of assembly, homohexamer; trimer of dimers.

The enzyme catalyses (8S)-3',8-cyclo-7,8-dihydroguanosine 5'-triphosphate = cyclic pyranopterin phosphate + diphosphate. Its pathway is cofactor biosynthesis; molybdopterin biosynthesis. Its function is as follows. Catalyzes the conversion of (8S)-3',8-cyclo-7,8-dihydroguanosine 5'-triphosphate to cyclic pyranopterin monophosphate (cPMP). The sequence is that of Cyclic pyranopterin monophosphate synthase 3 (moaC3) from Mycobacterium bovis (strain ATCC BAA-935 / AF2122/97).